We begin with the raw amino-acid sequence, 178 residues long: Large ribosomal subunit protein uL6 (178 aa).

This sequence belongs to the universal ribosomal protein uL6 family. Part of the 50S ribosomal subunit.

In terms of biological role, this protein binds to the 23S rRNA, and is important in its secondary structure. It is located near the subunit interface in the base of the L7/L12 stalk, and near the tRNA binding site of the peptidyltransferase center. This chain is Large ribosomal subunit protein uL6, found in Corynebacterium jeikeium (strain K411).